Reading from the N-terminus, the 137-residue chain is Histone H2B.4 (137 aa).

The segment covering 1-37 has biased composition (basic and acidic residues); the sequence is MAPKAEKKPAEKKPTEEKAEKKPRAEKRVPGKEGGEK. Residues 1–45 are disordered; it reads MAPKAEKKPAEKKPTEEKAEKKPRAEKRVPGKEGGEKKGKKKAKK. Residues Lys-7 and Lys-27 each carry the N6-acetyllysine modification. Residue Lys-133 forms a Glycyl lysine isopeptide (Lys-Gly) (interchain with G-Cter in ubiquitin) linkage.

Belongs to the histone H2B family. In terms of assembly, the nucleosome is a histone octamer containing two molecules each of H2A, H2B, H3 and H4 assembled in one H3-H4 heterotetramer and two H2A-H2B heterodimers. The octamer wraps approximately 147 bp of DNA. In terms of processing, can be acetylated to form H2BK6ac and H2BK33ac. Monoubiquitinated to form H2BK143ub1; may give a specific tag for epigenetic transcriptional activation.

The protein localises to the nucleus. The protein resides in the chromosome. Its function is as follows. Core component of nucleosome. Nucleosomes wrap and compact DNA into chromatin, limiting DNA accessibility to the cellular machineries which require DNA as a template. Histones thereby play a central role in transcription regulation, DNA repair, DNA replication and chromosomal stability. DNA accessibility is regulated via a complex set of post-translational modifications of histones, also called histone code, and nucleosome remodeling. In Zea mays (Maize), this protein is Histone H2B.4.